The primary structure comprises 187 residues: Putative manganese efflux pump MntP (187 aa).

The next 6 membrane-spanning stretches (helical) occupy residues 3–23, 35–55, 56–76, 107–127, 129–149, and 166–186; these read FYSL…VSLC, HYLI…TIGY, FIGI…AFIL, LALA…FAFL, VNLL…CIIA, and LLGG…HLFF.

The protein belongs to the MntP (TC 9.B.29) family.

The protein resides in the cell inner membrane. Its function is as follows. Probably functions as a manganese efflux pump. This is Putative manganese efflux pump MntP from Campylobacter jejuni subsp. doylei (strain ATCC BAA-1458 / RM4099 / 269.97).